The chain runs to 953 residues: Ubiquitin carboxyl-terminal hydrolase CYLD (953 aa).

An interaction with TRIP region spans residues 106–590; sequence CEERFSLFKN…FEIMIGKKKG (485 aa). 2 CAP-Gly domains span residues 153 to 198 and 253 to 286; these read LAER…VFVA and DVLP…VQLC. Disordered regions lie at residues 313-349 and 384-410; these read PPKL…RNRS and SLTE…LSSE. Residues 337-346 are compositionally biased toward polar residues; sequence TGSTSDPGTR. Phosphoserine is present on residues Ser-384, Ser-415, and Ser-419. The interaction with TRAF2 stretch occupies residues 391–466; sequence DFGHASPPLQ…LAVSSGNSHG (76 aa). The interaction with IKBKG/NEMO stretch occupies residues 467–681; it reads LEVGSLAEVK…FTSEEKDPEE (215 aa). The CAP-Gly 3 domain occupies 489 to 532; it reads GQPPGLNEVLAGLELEDECAGCTDGTFRGTRYFTCALKKALFVK. Positions 589–947 constitute a USP domain; sequence KGIQGHYNSC…DAYMCMYQSP (359 aa). The active-site Nucleophile is the Cys-598. Positions 778-830 are B-box; it reads LEDTPRQCRICGGLAMYECRECYDDPDISAGKIKQFCKTCNAQVHLHPKRLNH. Zn(2+) is bound by residues Cys-785, Cys-788, Cys-796, Cys-799, Cys-814, Cys-817, His-822, and His-830. The active-site Proton acceptor is His-868.

The protein belongs to the peptidase C19 family. Interacts (via CAP-Gly domain) with IKBKG/NEMO (via proline-rich C-terminal region). Interacts with TRAF2 and TRIP. Interacts with PLK1, DVL1, DVL3, MAVS, TBK1, IKKE and RIGI. Interacts (via CAP-Gly domain) with microtubules. Interacts with HDAC6 and BCL3. Interacts with MAP3K7. Identified in a complex with TRAF6 and SQSTM1. Interacts with OPTN and SQSTM1. Interacts with CEP350. Interacts with RNF31; the interaction is indirect and is mediated via SPATA2. Interacts with SPATA2 (via the PUB domain); the interaction is direct and recruits CYLD to the LUBAC complex, thereby regulating TNF-alpha-induced necroptosis. Phosphorylated on several serine residues by IKKA and/or IKKB in response to immune stimuli. Phosphorylation requires IKBKG. Phosphorylation abolishes TRAF2 deubiquitination, interferes with the activation of Jun kinases, and strongly reduces CD40-dependent gene activation by NF-kappa-B. Post-translationally, ubiquitinated. Polyubiquitinated in hepatocytes treated with palmitic acid. Ubiquitination is mediated by E3 ligase TRIM47 and leads to proteasomal degradation.

The protein resides in the cytoplasm. It localises to the perinuclear region. The protein localises to the cytoskeleton. Its subcellular location is the cell membrane. It is found in the microtubule organizing center. The protein resides in the centrosome. It localises to the spindle. The protein localises to the cilium basal body. The enzyme catalyses Thiol-dependent hydrolysis of ester, thioester, amide, peptide and isopeptide bonds formed by the C-terminal Gly of ubiquitin (a 76-residue protein attached to proteins as an intracellular targeting signal).. Deubiquitinase that specifically cleaves 'Lys-63'- and linear 'Met-1'-linked polyubiquitin chains and is involved in NF-kappa-B activation and TNF-alpha-induced necroptosis. Negatively regulates NF-kappa-B activation by deubiquitinating upstream signaling factors. Contributes to the regulation of cell survival, proliferation and differentiation via its effects on NF-kappa-B activation. Negative regulator of Wnt signaling. Inhibits HDAC6 and thereby promotes acetylation of alpha-tubulin and stabilization of microtubules. Plays a role in the regulation of microtubule dynamics, and thereby contributes to the regulation of cell proliferation, cell polarization, cell migration, and angiogenesis. Required for normal cell cycle progress and normal cytokinesis. Inhibits nuclear translocation of NF-kappa-B. Plays a role in the regulation of inflammation and the innate immune response, via its effects on NF-kappa-B activation. Dispensable for the maturation of intrathymic natural killer cells, but required for the continued survival of immature natural killer cells. Negatively regulates TNFRSF11A signaling and osteoclastogenesis. Involved in the regulation of ciliogenesis, allowing ciliary basal bodies to migrate and dock to the plasma membrane; this process does not depend on NF-kappa-B activation. Ability to remove linear ('Met-1'-linked) polyubiquitin chains regulates innate immunity and TNF-alpha-induced necroptosis: recruited to the LUBAC complex via interaction with SPATA2 and restricts linear polyubiquitin formation on target proteins. Regulates innate immunity by restricting linear polyubiquitin formation on RIPK2 in response to NOD2 stimulation. Involved in TNF-alpha-induced necroptosis by removing linear ('Met-1'-linked) polyubiquitin chains from RIPK1, thereby regulating the kinase activity of RIPK1. Negatively regulates intestinal inflammation by removing 'Lys-63' linked polyubiquitin chain of NLRP6, thereby reducing the interaction between NLRP6 and PYCARD/ASC and formation of the NLRP6 inflammasome. Does not catalyze deubiquitination of heterotypic 'Lys-63'-/'Lys-48'-linked branched ubiquitin chains. Removes 'Lys-63' linked polyubiquitin chain of MAP3K7, which inhibits phosphorylation and blocks downstream activation of the JNK-p38 kinase cascades. Also removes 'Lys-63'-linked polyubiquitin chains of MAP3K1 and MA3P3K3, which inhibit their interaction with MAP2K1 and MAP2K2. The sequence is that of Ubiquitin carboxyl-terminal hydrolase CYLD (CYLD) from Bos taurus (Bovine).